The sequence spans 487 residues: (S)-N-methylcoclaurine 3'-hydroxylase isozyme 1 (487 aa).

The chain crosses the membrane as a helical span at residues 4 to 24; it reads TVALIAVIISSILYLLFGGSG. Cys-429 lines the heme pocket.

The protein belongs to the cytochrome P450 family. Heme serves as cofactor.

It is found in the endoplasmic reticulum membrane. The protein resides in the microsome membrane. The catalysed reaction is (S)-N-methylcoclaurine + reduced [NADPH--hemoprotein reductase] + O2 = (S)-3'-hydroxy-N-methylcoclaurine + oxidized [NADPH--hemoprotein reductase] + H2O + H(+). It participates in alkaloid biosynthesis; (S)-reticuline biosynthesis; (S)-reticuline from (S)-norcoclaurine: step 3/4. Functionally, 3'-hydroxylation of (S)-N-methylcoclaurine. This chain is (S)-N-methylcoclaurine 3'-hydroxylase isozyme 1 (CYP80B1), found in Eschscholzia californica (California poppy).